Consider the following 31-residue polypeptide: uncharacterized protein (31 aa).

This is an uncharacterized protein from Saccharomyces cerevisiae (strain ATCC 204508 / S288c) (Baker's yeast).